Consider the following 211-residue polypeptide: Probable GTP-binding protein EngB (211 aa).

In terms of domain architecture, EngB-type G spans 30 to 204 (EGFEVAFAGR…YTVLADWMEL (175 aa)). Residues 38–45 (GRSNAGKS), 64–68 (GRTQL), 82–85 (DLPG), 149–152 (TKAD), and 182–185 (LFSA) each bind GTP. Mg(2+) contacts are provided by Ser45 and Thr66.

The protein belongs to the TRAFAC class TrmE-Era-EngA-EngB-Septin-like GTPase superfamily. EngB GTPase family. Mg(2+) serves as cofactor.

Functionally, necessary for normal cell division and for the maintenance of normal septation. The protein is Probable GTP-binding protein EngB of Pseudomonas savastanoi pv. phaseolicola (strain 1448A / Race 6) (Pseudomonas syringae pv. phaseolicola (strain 1448A / Race 6)).